A 140-amino-acid chain; its full sequence is Cysteine desulfuration protein SufE (140 aa).

Catalysis depends on C51, which acts as the Cysteine persulfide intermediate.

It belongs to the SufE family. As to quaternary structure, homodimer. Interacts with SufS.

It is found in the cytoplasm. Its pathway is cofactor biosynthesis; iron-sulfur cluster biosynthesis. Functionally, participates in cysteine desulfuration mediated by SufS. Cysteine desulfuration mobilizes sulfur from L-cysteine to yield L-alanine and constitutes an essential step in sulfur metabolism for biosynthesis of a variety of sulfur-containing biomolecules. Functions as a sulfur acceptor for SufS, by mediating the direct transfer of the sulfur atom from the S-sulfanylcysteine of SufS, an intermediate product of cysteine desulfuration process. In Yersinia enterocolitica serotype O:8 / biotype 1B (strain NCTC 13174 / 8081), this protein is Cysteine desulfuration protein SufE.